Reading from the N-terminus, the 205-residue chain is Recombination protein RecR (205 aa).

Residues 59–74 (CAMCNTFCEGGLCDIC) form a C4-type zinc finger. The Toprim domain occupies 82–177 (RRLMVVHMPA…KVSRLSQGIP (96 aa)).

This sequence belongs to the RecR family.

Its function is as follows. May play a role in DNA repair. It seems to be involved in an RecBC-independent recombinational process of DNA repair. It may act with RecF and RecO. In Neisseria meningitidis serogroup C (strain 053442), this protein is Recombination protein RecR.